A 611-amino-acid polypeptide reads, in one-letter code: Actin-interacting protein 1 (611 aa).

WD repeat units follow at residues 57–96, 145–185, 188–227, 237–276, 322–361, 446–485, 489–528, 534–573, and 579–610; these read EHSH…HILK, GQAR…FKST, EHTK…KTGV, AHSG…VEKT, GHNK…SNRV, PISY…VSEV, VHPA…ELAH, FHTA…DHPI, and HAMS…WNVP.

This sequence belongs to the WD repeat AIP1 family.

It localises to the cytoplasm. It is found in the cytoskeleton. Induces disassembly of actin filaments in conjunction with ADF/cofilin family proteins. Regulator of actin organization in myofibrils. The polypeptide is Actin-interacting protein 1 (unc-78) (Caenorhabditis elegans).